Here is a 116-residue protein sequence, read N- to C-terminus: MILQQPLERGPPGRDPRATTGVTLGLDTREPLHKHFLSEENMATHFSRLSLHNDHPYCSPPVTFPEALPPLRSPCPELLLWRYPGSLIPEALRLLRLGDNPSPYYSASPAGEIMEL.

Residues 1–22 (MILQQPLERGPPGRDPRATTGV) are disordered. An interaction with HCFC1 region spans residues 54-57 (DHPY). Residues 88-97 (IPEALRLLRL) carry the Nuclear export signal motif.

As to quaternary structure, interacts with HCFC1.

It localises to the cytoplasm. The protein localises to the nucleus. Functionally, regulates HCFC1 activity by modulating its subcellular localization. Overexpression of HCFC1R1 leads to accumulation of HCFC1 in the cytoplasm. HCFC1R1-mediated export may provide the pool of cytoplasmic HCFC1 required for import of virion-derived VP16 into the nucleus. The sequence is that of Host cell factor C1 regulator 1 (Hcfc1r1) from Rattus norvegicus (Rat).